The chain runs to 454 residues: 3-phosphoshikimate 1-carboxyvinyltransferase (454 aa).

Residues lysine 39, serine 40, and arginine 44 each contribute to the 3-phosphoshikimate site. Position 39 (lysine 39) interacts with phosphoenolpyruvate. Phosphoenolpyruvate is bound by residues glycine 112 and arginine 140. 4 residues coordinate 3-phosphoshikimate: serine 185, glutamine 187, aspartate 333, and lysine 360. Glutamine 187 serves as a coordination point for phosphoenolpyruvate. Aspartate 333 (proton acceptor) is an active-site residue. Residues arginine 364 and arginine 405 each contribute to the phosphoenolpyruvate site.

Belongs to the EPSP synthase family. As to quaternary structure, monomer.

It localises to the cytoplasm. It carries out the reaction 3-phosphoshikimate + phosphoenolpyruvate = 5-O-(1-carboxyvinyl)-3-phosphoshikimate + phosphate. It participates in metabolic intermediate biosynthesis; chorismate biosynthesis; chorismate from D-erythrose 4-phosphate and phosphoenolpyruvate: step 6/7. Its function is as follows. Catalyzes the transfer of the enolpyruvyl moiety of phosphoenolpyruvate (PEP) to the 5-hydroxyl of shikimate-3-phosphate (S3P) to produce enolpyruvyl shikimate-3-phosphate and inorganic phosphate. The sequence is that of 3-phosphoshikimate 1-carboxyvinyltransferase from Xylella fastidiosa (strain Temecula1 / ATCC 700964).